A 201-amino-acid polypeptide reads, in one-letter code: Retinol-binding protein 4 (201 aa).

An N-terminal signal peptide occupies residues 1–18; the sequence is MKWVWALLLLAALGSGRA. 3 disulfide bridges follow: Cys-22/Cys-178, Cys-88/Cys-192, and Cys-138/Cys-147. Gln-116 is a substrate binding site. Arg-139 carries the omega-N-methylarginine modification.

The protein belongs to the calycin superfamily. Lipocalin family. Interacts with TTR. Interaction with TTR prevents its loss by filtration through the kidney glomeruli. Interacts with STRA6. Detected in blood plasma and in urine (at protein level).

Its subcellular location is the secreted. In terms of biological role, retinol-binding protein that mediates retinol transport in blood plasma. Delivers retinol from the liver stores to the peripheral tissues. Transfers the bound all-trans retinol to STRA6, that then facilitates retinol transport across the cell membrane. This Homo sapiens (Human) protein is Retinol-binding protein 4 (RBP4).